Consider the following 226-residue polypeptide: UPF0758 protein SPs0978 (226 aa).

The MPN domain maps to 103-225; sequence SVLTSVQVAE…YYSFREKSTL (123 aa). Zn(2+) is bound by residues H174, H176, and D187. Positions 174-187 match the JAMM motif motif; sequence HNHPSGNIEPSSND.

It belongs to the UPF0758 family.

The chain is UPF0758 protein SPs0978 from Streptococcus pyogenes serotype M3 (strain SSI-1).